Here is a 1515-residue protein sequence, read N- to C-terminus: Neurite extension and migration factor (1515 aa).

Basic and acidic residues predominate over residues 381–405 (DKKKGKEEVHEDKSIETKDEKDNGE). Disordered stretches follow at residues 381–415 (DKKK…KPCG), 505–529 (VNER…PKKR), 731–774 (KKIK…HMSE), 1158–1225 (FDEP…TKKG), 1372–1422 (TPQE…EDSR), and 1435–1479 (TLGN…AGTT). 2 stretches are compositionally biased toward polar residues: residues 746-757 (SPVSEDTSSKAN) and 763-772 (TPGTSNSSHM). A compositionally biased stretch (low complexity) spans 1180–1193 (PGKSGAVSQSSSQK). Residues 1442–1452 (THKKLYRHKSS) show a composition bias toward basic residues. Residues 1455–1479 (GLRDEKYKGKRVEREQAHKDEAGTT) are compositionally biased toward basic and acidic residues.

Expressed in the brain, particularly during the late embryonic and perinatal stages of development. In the developing brain, it is expressed only in the cortical plate and subplate region but not in the intermediate or ventricular zone.

The protein resides in the nucleus. The protein localises to the cytoplasm. Involved in neurite outgrowth by regulating cell-cell adhesion via the N-cadherin signaling pathway. May act by regulating expression of protein-coding genes, such as N-cadherins and integrin beta-1 (ITGB1). This chain is Neurite extension and migration factor, found in Mus musculus (Mouse).